The sequence spans 448 residues: Phosphoglucosamine mutase (448 aa).

Catalysis depends on Ser-100, which acts as the Phosphoserine intermediate. 4 residues coordinate Mg(2+): Ser-100, Asp-240, Asp-242, and Asp-244. Ser-100 carries the phosphoserine modification.

The protein belongs to the phosphohexose mutase family. Mg(2+) is required as a cofactor. Post-translationally, activated by phosphorylation.

The catalysed reaction is alpha-D-glucosamine 1-phosphate = D-glucosamine 6-phosphate. In terms of biological role, catalyzes the conversion of glucosamine-6-phosphate to glucosamine-1-phosphate. This chain is Phosphoglucosamine mutase, found in Alkaliphilus metalliredigens (strain QYMF).